The following is a 316-amino-acid chain: Acetyl-coenzyme A carboxylase carboxyl transferase subunit alpha (316 aa).

A CoA carboxyltransferase C-terminal domain is found at 36–290 (LLEERLARLR…KEALLKALEE (255 aa)).

Belongs to the AccA family. Acetyl-CoA carboxylase is a heterohexamer composed of biotin carboxyl carrier protein (AccB), biotin carboxylase (AccC) and two subunits each of ACCase subunit alpha (AccA) and ACCase subunit beta (AccD).

The protein resides in the cytoplasm. It carries out the reaction N(6)-carboxybiotinyl-L-lysyl-[protein] + acetyl-CoA = N(6)-biotinyl-L-lysyl-[protein] + malonyl-CoA. The protein operates within lipid metabolism; malonyl-CoA biosynthesis; malonyl-CoA from acetyl-CoA: step 1/1. Its function is as follows. Component of the acetyl coenzyme A carboxylase (ACC) complex. First, biotin carboxylase catalyzes the carboxylation of biotin on its carrier protein (BCCP) and then the CO(2) group is transferred by the carboxyltransferase to acetyl-CoA to form malonyl-CoA. The polypeptide is Acetyl-coenzyme A carboxylase carboxyl transferase subunit alpha (Thermus thermophilus (strain ATCC 27634 / DSM 579 / HB8)).